A 289-amino-acid polypeptide reads, in one-letter code: MSAMRWPAPAKLNLFLHVNGRRPDGYHELQTLFIFLNHGDWLEFEPLTDTDLLTLSPAIPGVPDEQNLIIRAARLLQARLPSQQGAHIRLEKVLPMGGGIGGGSSDAATTLVALNHLWQAGLSEDELAELGVQLGADVPVFVRGKAAFAEGVGERLQPVELPSAWYLVLKPDCHVATAAVFQDPDLPRDTPKMALHNLLEGEWKNDCELLVKKRHPEVANALGWLLEYAPSRMTGTGACVFAQFEDEVAAREVLAKVPKGWDGFVAKGENISPLFAALQQVSDWGIAKR.

K11 is a catalytic residue. 95-105 serves as a coordination point for ATP; that stretch reads PMGGGIGGGSS. The active site involves D137.

This sequence belongs to the GHMP kinase family. IspE subfamily.

The catalysed reaction is 4-CDP-2-C-methyl-D-erythritol + ATP = 4-CDP-2-C-methyl-D-erythritol 2-phosphate + ADP + H(+). The protein operates within isoprenoid biosynthesis; isopentenyl diphosphate biosynthesis via DXP pathway; isopentenyl diphosphate from 1-deoxy-D-xylulose 5-phosphate: step 3/6. Its function is as follows. Catalyzes the phosphorylation of the position 2 hydroxy group of 4-diphosphocytidyl-2C-methyl-D-erythritol. The sequence is that of 4-diphosphocytidyl-2-C-methyl-D-erythritol kinase from Aeromonas hydrophila subsp. hydrophila (strain ATCC 7966 / DSM 30187 / BCRC 13018 / CCUG 14551 / JCM 1027 / KCTC 2358 / NCIMB 9240 / NCTC 8049).